A 396-amino-acid polypeptide reads, in one-letter code: MKSLVFNPFSGAAGDMILGCALDLGADRGEVKELIESSAPVSMDIREVVKKGIKALDVRINVPEKEYFRTYPEIVDLVKASKLPSKVEASALDIFLKMAEAEAAVHGQPDLEKLHFHEVGQSDALADVIGSSAAIHSLNCDSVYCTPINVGSGTIECAHGTLPVPAPATLEILRRGKLYFRGGNVNKELLTPTGAAILAHFAKPVDNFPQGRAVAIGYGAGDAELQGPNVLQGVLIEPDSHLVPDIIEVLETNADDVSGEVLGNLFEELLSMGARDVAIMPATMKKGRPAHIIKVIAKPEDSAKLARKIIVETGSLGVRVMPARHRLTASRNIERIKIDLEGQEFETAVKIARDSEGVLLNISAEFEDCKKIAKTSGVPVREVMRRAEEAARKLFS.

It belongs to the LarC family.

This Methanosarcina mazei (strain ATCC BAA-159 / DSM 3647 / Goe1 / Go1 / JCM 11833 / OCM 88) (Methanosarcina frisia) protein is Putative nickel insertion protein.